A 106-amino-acid chain; its full sequence is MILSNLSYIDNKELETINIVEGVCVFSKNVGKDIMASFKNVVGGEIKSYSEMVRDVKDTAVKKMVEEAKNLGADAVINIRYAMTSMSQGSTLAVIVSGTAVKVKGE.

Belongs to the UPF0145 family.

The protein is UPF0145 protein CTC_01500 of Clostridium tetani (strain Massachusetts / E88).